A 497-amino-acid polypeptide reads, in one-letter code: 3-octaprenyl-4-hydroxybenzoate carboxy-lyase (497 aa).

Position 175 (Asn175) interacts with Mn(2+). Residues 178–180 (IYR), 192–194 (RWL), and 197–198 (RG) contribute to the prenylated FMN site. Glu241 is a binding site for Mn(2+). Catalysis depends on Asp290, which acts as the Proton donor.

It belongs to the UbiD family. Homohexamer. It depends on prenylated FMN as a cofactor. Mn(2+) is required as a cofactor.

It localises to the cell membrane. It carries out the reaction a 4-hydroxy-3-(all-trans-polyprenyl)benzoate + H(+) = a 2-(all-trans-polyprenyl)phenol + CO2. The protein operates within cofactor biosynthesis; ubiquinone biosynthesis. Functionally, catalyzes the decarboxylation of 3-octaprenyl-4-hydroxy benzoate to 2-octaprenylphenol, an intermediate step in ubiquinone biosynthesis. This is 3-octaprenyl-4-hydroxybenzoate carboxy-lyase from Shigella boydii serotype 4 (strain Sb227).